Here is a 203-residue protein sequence, read N- to C-terminus: Glycerol-3-phosphate acyltransferase (203 aa).

A run of 4 helical transmembrane segments spans residues 4 to 24, 68 to 88, 117 to 137, and 155 to 175; these read LALIMTMAAYLLGSISSAVLI, IPVWGGYFLGIDPIILGVIAI, PIGLDLTGLVMLTWLSVAVLF, and TWMFKPQYTLPVAMLCCLIVF.

The protein belongs to the PlsY family. In terms of assembly, probably interacts with PlsX.

It is found in the cell inner membrane. The catalysed reaction is an acyl phosphate + sn-glycerol 3-phosphate = a 1-acyl-sn-glycero-3-phosphate + phosphate. The protein operates within lipid metabolism; phospholipid metabolism. Functionally, catalyzes the transfer of an acyl group from acyl-phosphate (acyl-PO(4)) to glycerol-3-phosphate (G3P) to form lysophosphatidic acid (LPA). This enzyme utilizes acyl-phosphate as fatty acyl donor, but not acyl-CoA or acyl-ACP. The protein is Glycerol-3-phosphate acyltransferase of Vibrio campbellii (strain ATCC BAA-1116).